The sequence spans 197 residues: ATP synthase subunit delta (197 aa).

Belongs to the ATPase delta chain family. As to quaternary structure, F-type ATPases have 2 components, F(1) - the catalytic core - and F(0) - the membrane proton channel. F(1) has five subunits: alpha(3), beta(3), gamma(1), delta(1), epsilon(1). F(0) has three main subunits: a(1), b(2) and c(10-14). The alpha and beta chains form an alternating ring which encloses part of the gamma chain. F(1) is attached to F(0) by a central stalk formed by the gamma and epsilon chains, while a peripheral stalk is formed by the delta and b chains.

It localises to the cell inner membrane. In terms of biological role, f(1)F(0) ATP synthase produces ATP from ADP in the presence of a proton or sodium gradient. F-type ATPases consist of two structural domains, F(1) containing the extramembraneous catalytic core and F(0) containing the membrane proton channel, linked together by a central stalk and a peripheral stalk. During catalysis, ATP synthesis in the catalytic domain of F(1) is coupled via a rotary mechanism of the central stalk subunits to proton translocation. Functionally, this protein is part of the stalk that links CF(0) to CF(1). It either transmits conformational changes from CF(0) to CF(1) or is implicated in proton conduction. This is ATP synthase subunit delta from Bartonella henselae (strain ATCC 49882 / DSM 28221 / CCUG 30454 / Houston 1) (Rochalimaea henselae).